The following is a 337-amino-acid chain: Mitochondrial glutathione transporter SLC25A40 (337 aa).

3 Solcar repeats span residues 14–132, 140–224, and 234–328; these read VTPL…LSTF, NETR…LRRW, and STFM…GKGF. Helical transmembrane passes span 20 to 40, 104 to 124, 146 to 166, 200 to 221, 240 to 260, and 299 to 319; these read MMASCAGAVVTSLMVTPLDVV, LWSGLPPTLVMAVPATVIYFT, IVAGIVARFGAVTMISPLELI, WAPTILRDVPFSAMYWYNYENL, FTAGALSGSFAAVATLPFDVV, and GLFTGLIPRLVKIVPACAIMI.

Belongs to the mitochondrial carrier (TC 2.A.29) family. Widely expressed at low level.

Its subcellular location is the mitochondrion inner membrane. It catalyses the reaction glutathione(in) = glutathione(out). Its function is as follows. Probable mitochondrial transporter required for glutathione import into mitochondria. Glutathione, which plays key roles in oxidative metabolism, is produced exclusively in the cytosol and is imported in many organelles. Mitochondrial glutathione is required for the activity and stability of proteins containing iron-sulfur clusters, as well as erythropoiesis. In Rattus norvegicus (Rat), this protein is Mitochondrial glutathione transporter SLC25A40.